A 344-amino-acid polypeptide reads, in one-letter code: tRNA N6-adenosine threonylcarbamoyltransferase (344 aa).

Fe cation-binding residues include His-111 and His-115. Substrate contacts are provided by residues 134–138 (LVSGG), Asp-167, Gly-180, and Asn-273. Asp-301 provides a ligand contact to Fe cation.

It belongs to the KAE1 / TsaD family. Fe(2+) is required as a cofactor.

It is found in the cytoplasm. The enzyme catalyses L-threonylcarbamoyladenylate + adenosine(37) in tRNA = N(6)-L-threonylcarbamoyladenosine(37) in tRNA + AMP + H(+). In terms of biological role, required for the formation of a threonylcarbamoyl group on adenosine at position 37 (t(6)A37) in tRNAs that read codons beginning with adenine. Is involved in the transfer of the threonylcarbamoyl moiety of threonylcarbamoyl-AMP (TC-AMP) to the N6 group of A37, together with TsaE and TsaB. TsaD likely plays a direct catalytic role in this reaction. This chain is tRNA N6-adenosine threonylcarbamoyltransferase, found in Cupriavidus taiwanensis (strain DSM 17343 / BCRC 17206 / CCUG 44338 / CIP 107171 / LMG 19424 / R1) (Ralstonia taiwanensis (strain LMG 19424)).